A 311-amino-acid polypeptide reads, in one-letter code: MNPKKLVIASRESLLAMWQAKHIQGRLKALYPDCEVEILGMTTRGDQILDKTLSKVGGKGLFVKELEQALYDGRADLAVHSIKDVPMDLPEGFALAAIGERANPFDAFVSNQYTRLEEMPEGAVVGTSSLRREAQLRARYPHLLIKPLRGNVQTRLSKLDNGEYDAIILAAAGLQRLKLDGRIRMILSESDSLPAAGQGALGIEIAAHREDLYEVLKPLNHGVTNACVTAERALARALGGSCQVPLAAYCTEENGLLTLRGLVGHPDGSVVLRADAQAPAEYADALGRAVAKKLADDGARELIGAVLNTEN.

Cys-242 carries the S-(dipyrrolylmethanemethyl)cysteine modification.

The protein belongs to the HMBS family. As to quaternary structure, monomer. Requires dipyrromethane as cofactor.

It catalyses the reaction 4 porphobilinogen + H2O = hydroxymethylbilane + 4 NH4(+). Its pathway is porphyrin-containing compound metabolism; protoporphyrin-IX biosynthesis; coproporphyrinogen-III from 5-aminolevulinate: step 2/4. Functionally, tetrapolymerization of the monopyrrole PBG into the hydroxymethylbilane pre-uroporphyrinogen in several discrete steps. This Neisseria meningitidis serogroup B (strain ATCC BAA-335 / MC58) protein is Porphobilinogen deaminase (hemC).